We begin with the raw amino-acid sequence, 343 residues long: MSNTVFSGAVGPLRAAALSISRHRLPLLCAAGLGLTAVASWMWWRKRQGEAEDLQQVGIVSQLLIYPVKSCRAVPVQEAECSALGLKSGHLEDRHWLVVTEEGNMVTARQEPRMVLISATFCGNTLCLNGPEMQEVQIPLPLPKSNRVLDCRVFGQDIQGRDSGEQASEWLATYFQSSQPYRLVHFEADVMRPRQSKKKEKLFRDKDVIAYPDASPIMLLSETSMEALNSRLEQPVSLANFRPCIVASGCEAFAEDDWDDVRLGATRLKRVMACGRCVLTTVNPNSGVITRKEPLDTLRTFRQSDSSLKEVYKNAPLFGQYYGVEQTGIIRVGDPVYRVTRKG.

The Mitochondrial matrix portion of the chain corresponds to 1-25 (MSNTVFSGAVGPLRAAALSISRHRL). A helical; Signal-anchor for type II membrane protein transmembrane segment spans residues 26–44 (PLLCAAGLGLTAVASWMWW). Over 45-343 (RKRQGEAEDL…DPVYRVTRKG (299 aa)) the chain is Cytoplasmic. Residues lysine 69, serine 70, and arginine 94 each contribute to the Mo-molybdopterin site. The tract at residues 95–186 (HWLVVTEEGN…SSQPYRLVHF (92 aa)) is MOSC N-terminal region. The MOSC domain occupies 181 to 339 (YRLVHFEADV…IRVGDPVYRV (159 aa)). 5 residues coordinate Mo-molybdopterin: serine 215, arginine 242, arginine 276, cysteine 277, and tyrosine 321.

Mo-molybdopterin serves as cofactor.

The protein localises to the mitochondrion outer membrane. Its subcellular location is the membrane. It catalyses the reaction N(omega)-hydroxy-L-arginine + 2 Fe(II)-[cytochrome b5] + 2 H(+) = L-arginine + 2 Fe(III)-[cytochrome b5] + H2O. Functionally, catalyzes the reduction of N-oxygenated molecules, acting as a counterpart of cytochrome P450 and flavin-containing monooxygenases in metabolic cycles. As a component of prodrug-converting system, reduces a multitude of N-hydroxylated prodrugs particularly amidoximes, leading to increased drug bioavailability. May be involved in mitochondrial N(omega)-hydroxy-L-arginine (NOHA) reduction, regulating endogenous nitric oxide levels and biosynthesis. Postulated to cleave the N-OH bond of N-hydroxylated substrates in concert with electron transfer from NADH to cytochrome b5 reductase then to cytochrome b5, the ultimate electron donor that primes the active site for substrate reduction. The polypeptide is Mitochondrial amidoxime-reducing component 1 (mtarc1) (Xenopus laevis (African clawed frog)).